Consider the following 83-residue polypeptide: Small ribosomal subunit protein uS17 (83 aa).

Belongs to the universal ribosomal protein uS17 family. Part of the 30S ribosomal subunit.

One of the primary rRNA binding proteins, it binds specifically to the 5'-end of 16S ribosomal RNA. The sequence is that of Small ribosomal subunit protein uS17 from Francisella philomiragia subsp. philomiragia (strain ATCC 25017 / CCUG 19701 / FSC 153 / O#319-036).